A 439-amino-acid chain; its full sequence is Histidine--tRNA ligase (439 aa).

Belongs to the class-II aminoacyl-tRNA synthetase family. In terms of assembly, homodimer.

The protein resides in the cytoplasm. The catalysed reaction is tRNA(His) + L-histidine + ATP = L-histidyl-tRNA(His) + AMP + diphosphate + H(+). The protein is Histidine--tRNA ligase of Leptospira interrogans serogroup Icterohaemorrhagiae serovar copenhageni (strain Fiocruz L1-130).